Reading from the N-terminus, the 396-residue chain is 4-hydroxy-3-methylbut-2-en-1-yl diphosphate synthase (ferredoxin) (396 aa).

[4Fe-4S] cluster is bound by residues cysteine 305, cysteine 308, cysteine 339, and glutamate 346.

The protein belongs to the IspG family. It depends on [4Fe-4S] cluster as a cofactor.

It catalyses the reaction (2E)-4-hydroxy-3-methylbut-2-enyl diphosphate + 2 oxidized [2Fe-2S]-[ferredoxin] + H2O = 2-C-methyl-D-erythritol 2,4-cyclic diphosphate + 2 reduced [2Fe-2S]-[ferredoxin] + H(+). Its pathway is isoprenoid biosynthesis; isopentenyl diphosphate biosynthesis via DXP pathway; isopentenyl diphosphate from 1-deoxy-D-xylulose 5-phosphate: step 5/6. Functionally, converts 2C-methyl-D-erythritol 2,4-cyclodiphosphate (ME-2,4cPP) into 1-hydroxy-2-methyl-2-(E)-butenyl 4-diphosphate. The sequence is that of 4-hydroxy-3-methylbut-2-en-1-yl diphosphate synthase (ferredoxin) from Gloeobacter violaceus (strain ATCC 29082 / PCC 7421).